The sequence spans 391 residues: Immediate-early protein 2 (391 aa).

Belongs to the herpesviridae US22 family.

It localises to the host cytoplasm. It is found in the host nucleus. In terms of biological role, involved in the reactivation of latent MCMV in spleen cells. This chain is Immediate-early protein 2 (IE2), found in Murid herpesvirus 1 (strain Smith) (MuHV-1).